A 309-amino-acid polypeptide reads, in one-letter code: Olfactory receptor 1L8 (309 aa).

Over 1–26 (MERINHTSSVSEFILLGLSSRPEDQK) the chain is Extracellular. N-linked (GlcNAc...) asparagine glycosylation occurs at Asn-5. Residues 27-50 (TLFVLFLIVYLVTITGNLLIILAI) traverse the membrane as a helical segment. Residues 51 to 58 (RFNPHLQT) are Cytoplasmic-facing. The helical transmembrane segment at 59–80 (PMYFFLSFLSLTDICFTTSVVP) threads the bilayer. Topologically, residues 81-101 (KMLMNFLSEKKTISYAGCLTQ) are extracellular. Residues Cys-98 and Cys-190 are joined by a disulfide bond. The helical transmembrane segment at 102-121 (MYFLYALGNSDSCLLAVMAF) threads the bilayer. The Cytoplasmic segment spans residues 122–140 (DRYVAVCDPFHYVTTMSHH). The chain crosses the membrane as a helical span at residues 141-159 (HCVLLVAFSCSFPHLHSLL). Topologically, residues 160-197 (HTLLLNRLTFCDSNVIHHFLCDLSPVLKLSCSSIFVNE) are extracellular. A helical membrane pass occupies residues 198 to 220 (IVQMTEAPIVLVTRFLCIAFSYI). Over 221 to 237 (RILTTVLKIPSTSGKRK) the chain is Cytoplasmic. A helical transmembrane segment spans residues 238–260 (AFSTCGFYLTVVTLFYGSIFCVY). The Extracellular portion of the chain corresponds to 261-272 (LQPPSTYAVKDH). A helical membrane pass occupies residues 273–292 (VATIVYTVLSSMLNPFIYSL). Residues 293–309 (RNKDLKQGLRKLMSKRS) are Cytoplasmic-facing.

Belongs to the G-protein coupled receptor 1 family.

It localises to the cell membrane. Functionally, odorant receptor. The chain is Olfactory receptor 1L8 (OR1L8) from Homo sapiens (Human).